A 73-amino-acid chain; its full sequence is Somatostatin-2 (73 aa).

Positions 1-45 (SAGLLTQEWSAVEDLLAQMSLPEADAQRDAEMVSTATGGGRMNQE) are excised as a propeptide. Residues 23 to 58 (EADAQRDAEMVSTATGGGRMNQESIEPPNNLPPRER) form a disordered region. Residues cysteine 62 and cysteine 73 are joined by a disulfide bond.

This sequence belongs to the somatostatin family.

The protein resides in the secreted. Somatostatin inhibits the release of somatotropin. In Platichthys flesus (European flounder), this protein is Somatostatin-2 (sst2).